Reading from the N-terminus, the 369-residue chain is tRNA/tmRNA (uracil-C(5))-methyltransferase (369 aa).

Residues glutamine 190, tyrosine 218, asparagine 223, glutamate 239, and aspartate 301 each contribute to the S-adenosyl-L-methionine site. The active-site Nucleophile is the cysteine 326. The active-site Proton acceptor is glutamate 360.

Belongs to the class I-like SAM-binding methyltransferase superfamily. RNA M5U methyltransferase family. TrmA subfamily.

It carries out the reaction uridine(54) in tRNA + S-adenosyl-L-methionine = 5-methyluridine(54) in tRNA + S-adenosyl-L-homocysteine + H(+). The catalysed reaction is uridine(341) in tmRNA + S-adenosyl-L-methionine = 5-methyluridine(341) in tmRNA + S-adenosyl-L-homocysteine + H(+). Functionally, dual-specificity methyltransferase that catalyzes the formation of 5-methyluridine at position 54 (m5U54) in all tRNAs, and that of position 341 (m5U341) in tmRNA (transfer-mRNA). The sequence is that of tRNA/tmRNA (uracil-C(5))-methyltransferase from Vibrio vulnificus (strain CMCP6).